A 170-amino-acid polypeptide reads, in one-letter code: Nucleoside-triphosphatase THEP1 (170 aa).

ATP-binding positions include 7–14 and 98–105; these read GMPGVGKT and IIIIDELG.

Belongs to the THEP1 NTPase family.

The catalysed reaction is a ribonucleoside 5'-triphosphate + H2O = a ribonucleoside 5'-diphosphate + phosphate + H(+). In terms of biological role, has nucleotide phosphatase activity towards ATP, GTP, CTP, TTP and UTP. May hydrolyze nucleoside diphosphates with lower efficiency. In Methanocaldococcus jannaschii (strain ATCC 43067 / DSM 2661 / JAL-1 / JCM 10045 / NBRC 100440) (Methanococcus jannaschii), this protein is Nucleoside-triphosphatase THEP1.